The following is a 115-amino-acid chain: Large ribosomal subunit protein bL19 (115 aa).

This sequence belongs to the bacterial ribosomal protein bL19 family.

In terms of biological role, this protein is located at the 30S-50S ribosomal subunit interface and may play a role in the structure and function of the aminoacyl-tRNA binding site. The polypeptide is Large ribosomal subunit protein bL19 (Coxiella burnetii (strain CbuK_Q154) (Coxiella burnetii (strain Q154))).